A 590-amino-acid polypeptide reads, in one-letter code: Transcription factor bHLH13 (590 aa).

Disordered regions lie at residues 274–296 (LQHHQHHQQQQQQPPQQQQHRQF) and 385–439 (AASS…EAER). The span at 281–293 (QQQQQQPPQQQQH) shows a compositional bias: low complexity. Over residues 416–425 (RPRKRGRRPA) the composition is skewed to basic residues. In terms of domain architecture, bHLH spans 429–478 (AEALNHVEAERQRREKLNQRFYALRSVVPNISKMDKASLLGDAVSYINEL).

As to quaternary structure, homodimer.

It localises to the nucleus. The sequence is that of Transcription factor bHLH13 (BHLH13) from Arabidopsis thaliana (Mouse-ear cress).